The sequence spans 265 residues: L-histidine 2-aminobutanoyltransferase (265 aa).

Belongs to the methyltransferase superfamily. CntL family.

It catalyses the reaction L-histidine + S-adenosyl-L-methionine = (2S)-2-amino-4-{[(1S)-1-carboxy-2-(1H-imidazol-4-yl)ethyl]amino}butanoate + S-methyl-5'-thioadenosine + H(+). Its function is as follows. Catalyzes the nucleophilic attack of one alpha-aminobutanoate moiety from SAM onto L-histidine to produce the intermediate (2S)-2-amino-4-{[(1S)-1-carboxy-2-(1H-imidazol-4-yl)ethyl]amino}butanoate. Functions in the biosynthesis of the metallophore yersinopine, which is involved in metal acquisition and thus enables bacterial growth inside the host, where metal access is limited. Therefore, this enzyme probably contributes to Yersinia virulence. This is L-histidine 2-aminobutanoyltransferase from Yersinia pestis.